A 69-amino-acid chain; its full sequence is Putative membrane protein insertion efficiency factor (69 aa).

The protein belongs to the UPF0161 family.

Its subcellular location is the cell membrane. Its function is as follows. Could be involved in insertion of integral membrane proteins into the membrane. The chain is Putative membrane protein insertion efficiency factor from Clostridium botulinum (strain Okra / Type B1).